A 102-amino-acid chain; its full sequence is Small ribosomal subunit protein uS10 (102 aa).

This sequence belongs to the universal ribosomal protein uS10 family. In terms of assembly, part of the 30S ribosomal subunit.

In terms of biological role, involved in the binding of tRNA to the ribosomes. The sequence is that of Small ribosomal subunit protein uS10 from Thermobifida fusca (strain YX).